The sequence spans 159 residues: 2-C-methyl-D-erythritol 2,4-cyclodiphosphate synthase (159 aa).

The a divalent metal cation site is built by Asp10 and His12. 4-CDP-2-C-methyl-D-erythritol 2-phosphate is bound by residues 10–12 (DVH) and 36–37 (HS). His44 is a binding site for a divalent metal cation. 4-CDP-2-C-methyl-D-erythritol 2-phosphate is bound by residues 58 to 60 (DIG), 63 to 67 (FSDTD), and Arg144.

This sequence belongs to the IspF family. In terms of assembly, homotrimer. It depends on a divalent metal cation as a cofactor.

The enzyme catalyses 4-CDP-2-C-methyl-D-erythritol 2-phosphate = 2-C-methyl-D-erythritol 2,4-cyclic diphosphate + CMP. Its pathway is isoprenoid biosynthesis; isopentenyl diphosphate biosynthesis via DXP pathway; isopentenyl diphosphate from 1-deoxy-D-xylulose 5-phosphate: step 4/6. Functionally, involved in the biosynthesis of isopentenyl diphosphate (IPP) and dimethylallyl diphosphate (DMAPP), two major building blocks of isoprenoid compounds. Catalyzes the conversion of 4-diphosphocytidyl-2-C-methyl-D-erythritol 2-phosphate (CDP-ME2P) to 2-C-methyl-D-erythritol 2,4-cyclodiphosphate (ME-CPP) with a corresponding release of cytidine 5-monophosphate (CMP). The protein is 2-C-methyl-D-erythritol 2,4-cyclodiphosphate synthase of Paraburkholderia phytofirmans (strain DSM 17436 / LMG 22146 / PsJN) (Burkholderia phytofirmans).